The sequence spans 280 residues: Cobalt import ATP-binding protein CbiO (280 aa).

Positions Ile-2 to Gly-236 constitute an ABC transporter domain. Gly-36 to Thr-43 lines the ATP pocket.

Belongs to the ABC transporter superfamily. Cobalt importer (TC 3.A.1.18.1) family. In terms of assembly, forms an energy-coupling factor (ECF) transporter complex composed of an ATP-binding protein (A component, CbiO), a transmembrane protein (T component, CbiQ) and 2 possible substrate-capture proteins (S components, CbiM and CbiN) of unknown stoichimetry.

It is found in the cell inner membrane. It participates in cofactor biosynthesis; adenosylcobalamin biosynthesis. Functionally, part of the energy-coupling factor (ECF) transporter complex CbiMNOQ involved in cobalt import. Presumably responsible for energy coupling to the transport system. In Syntrophus aciditrophicus (strain SB), this protein is Cobalt import ATP-binding protein CbiO.